The sequence spans 184 residues: Ribosome maturation factor RimM (184 aa).

The PRC barrel domain occupies 101-180 (DGEFFYCDLV…KITTNNAKTL (80 aa)).

It belongs to the RimM family. As to quaternary structure, binds ribosomal protein uS19.

The protein resides in the cytoplasm. An accessory protein needed during the final step in the assembly of 30S ribosomal subunit, possibly for assembly of the head region. Essential for efficient processing of 16S rRNA. May be needed both before and after RbfA during the maturation of 16S rRNA. It has affinity for free ribosomal 30S subunits but not for 70S ribosomes. This is Ribosome maturation factor RimM from Helicobacter pylori (strain Shi470).